The sequence spans 863 residues: DNA-directed RNA polymerase subunit beta' (863 aa).

The tract at residues M1–Q83 is disordered. Residues E23 to K36 are compositionally biased toward polar residues. Residues C159, C161, C180, and C183 each coordinate Zn(2+). Mg(2+) is bound by residues D621, D623, and D625.

It belongs to the RNA polymerase beta' chain family. RpoC1 subfamily. As to quaternary structure, in plastids the minimal PEP RNA polymerase catalytic core is composed of four subunits: alpha, beta, beta', and beta''. When a (nuclear-encoded) sigma factor is associated with the core the holoenzyme is formed, which can initiate transcription. Mg(2+) serves as cofactor. Zn(2+) is required as a cofactor.

It is found in the plastid. Its subcellular location is the chloroplast. It carries out the reaction RNA(n) + a ribonucleoside 5'-triphosphate = RNA(n+1) + diphosphate. Functionally, DNA-dependent RNA polymerase catalyzes the transcription of DNA into RNA using the four ribonucleoside triphosphates as substrates. In Nephroselmis olivacea (Green alga), this protein is DNA-directed RNA polymerase subunit beta'.